The chain runs to 268 residues: Tryptophan synthase alpha chain (268 aa).

Catalysis depends on proton acceptor residues E49 and D60.

Belongs to the TrpA family. Tetramer of two alpha and two beta chains.

It catalyses the reaction (1S,2R)-1-C-(indol-3-yl)glycerol 3-phosphate + L-serine = D-glyceraldehyde 3-phosphate + L-tryptophan + H2O. It functions in the pathway amino-acid biosynthesis; L-tryptophan biosynthesis; L-tryptophan from chorismate: step 5/5. Its function is as follows. The alpha subunit is responsible for the aldol cleavage of indoleglycerol phosphate to indole and glyceraldehyde 3-phosphate. This chain is Tryptophan synthase alpha chain, found in Dechloromonas aromatica (strain RCB).